Reading from the N-terminus, the 335-residue chain is Glycerol-3-phosphate dehydrogenase [NAD(P)+] (335 aa).

Positions 12, 13, and 107 each coordinate NADPH. 3 residues coordinate sn-glycerol 3-phosphate: K107, G138, and S140. Residue A142 participates in NADPH binding. 5 residues coordinate sn-glycerol 3-phosphate: K193, D246, S256, R257, and N258. K193 serves as the catalytic Proton acceptor. Residue R257 participates in NADPH binding. NADPH-binding residues include V281 and E283.

The protein belongs to the NAD-dependent glycerol-3-phosphate dehydrogenase family.

The protein resides in the cytoplasm. The catalysed reaction is sn-glycerol 3-phosphate + NAD(+) = dihydroxyacetone phosphate + NADH + H(+). It catalyses the reaction sn-glycerol 3-phosphate + NADP(+) = dihydroxyacetone phosphate + NADPH + H(+). It functions in the pathway membrane lipid metabolism; glycerophospholipid metabolism. Its function is as follows. Catalyzes the reduction of the glycolytic intermediate dihydroxyacetone phosphate (DHAP) to sn-glycerol 3-phosphate (G3P), the key precursor for phospholipid synthesis. In Citrifermentans bemidjiense (strain ATCC BAA-1014 / DSM 16622 / JCM 12645 / Bem) (Geobacter bemidjiensis), this protein is Glycerol-3-phosphate dehydrogenase [NAD(P)+].